We begin with the raw amino-acid sequence, 85 residues long: Neurotoxin beta-KTx 17 (85 aa).

The first 20 residues, 1 to 20 (MKQYIFFLALIVLVSTFAEA), serve as a signal peptide directing secretion. The propeptide occupies 21–37 (GKKTEILDKVKKVFSKG). The region spanning 49–85 (ELGCPFIEKWCEDHCESKKQVGKCENFDCSCVKLGGK) is the BetaSPN-type CS-alpha/beta domain. 3 disulfide bridges follow: cysteine 52/cysteine 72, cysteine 59/cysteine 77, and cysteine 63/cysteine 79.

Belongs to the long chain scorpion toxin family. Class 2 subfamily. As to expression, expressed by the venom gland.

It is found in the secreted. Has a very weak effect to block voltage-gated potassium channel Kv1.1/KCNA1. The polypeptide is Neurotoxin beta-KTx 17 (Lychas mucronatus (Chinese swimming scorpion)).